The following is a 534-amino-acid chain: (R)-citramalate synthase (534 aa).

A Pyruvate carboxyltransferase domain is found at 11–274 (FHVFDTTLRD…KQVLPEGRLR (264 aa)).

Belongs to the alpha-IPM synthase/homocitrate synthase family.

The catalysed reaction is pyruvate + acetyl-CoA + H2O = (3R)-citramalate + CoA + H(+). It functions in the pathway amino-acid biosynthesis; L-isoleucine biosynthesis; 2-oxobutanoate from pyruvate: step 1/3. In terms of biological role, catalyzes the condensation of pyruvate and acetyl-coenzyme A to form (R)-citramalate. The polypeptide is (R)-citramalate synthase (Streptomyces coelicolor (strain ATCC BAA-471 / A3(2) / M145)).